The following is a 711-amino-acid chain: Long-chain-fatty-acid--CoA ligase 4 (711 aa).

Residues 8–28 form a helical; Signal-anchor for type III membrane protein membrane-spanning segment; the sequence is LTIVLLPVHLLITIYSALIFI. The Cytoplasmic portion of the chain corresponds to 29–711; sequence PWYFLTNAKK…KDIERMYGGK (683 aa). At Ser-447 the chain carries Phosphoserine.

The protein belongs to the ATP-dependent AMP-binding enzyme family. Mg(2+) serves as cofactor.

The protein localises to the mitochondrion outer membrane. It is found in the peroxisome membrane. Its subcellular location is the microsome membrane. It localises to the endoplasmic reticulum membrane. The protein resides in the cell membrane. It catalyses the reaction a long-chain fatty acid + ATP + CoA = a long-chain fatty acyl-CoA + AMP + diphosphate. The catalysed reaction is (5Z,8Z,11Z,14Z)-eicosatetraenoate + ATP + CoA = (5Z,8Z,11Z,14Z)-eicosatetraenoyl-CoA + AMP + diphosphate. It carries out the reaction 15-hydroxy-(5Z,8Z,11Z,13E)-eicosatetraenoate + ATP + CoA = 15-hydroxy-(5Z,8Z,11Z,13E)-eicosatetraenoyl-CoA + AMP + diphosphate. The enzyme catalyses 12-hydroxy-(5Z,8Z,10E,14Z)-eicosatetraenoate + ATP + CoA = 12-hydroxy-(5Z,8Z,10E,14Z)-eicosatetraenoyl-CoA + AMP + diphosphate. It catalyses the reaction 5-hydroxy-(6E,8Z,11Z,14Z)-eicosatetraenoate + ATP + CoA = 5-hydroxy-(6E,8Z,11Z,14Z)-eicosatetraenoyl-CoA + AMP + diphosphate. The catalysed reaction is 5,6-epoxy-(8Z,11Z,14Z)-eicosatrienoate + ATP + CoA = 5,6-epoxy-(8Z,11Z,14Z)-eicosatrienoyl-CoA + AMP + diphosphate. It carries out the reaction 14,15-epoxy-(5Z,8Z,11Z)-eicosatrienoate + ATP + CoA = 14,15-epoxy-(5Z,8Z,11Z)-eicosatrienoyl-CoA + AMP + diphosphate. The enzyme catalyses 11,12-epoxy-(5Z,8Z,14Z)-eicosatrienoate + ATP + CoA = 11,12-epoxy-(5Z,8Z,14Z)-eicosatrienoyl-CoA + AMP + diphosphate. It catalyses the reaction 8,9-epoxy-(5Z,11Z,14Z)-eicosatrienoate + ATP + CoA = 8,9-epoxy-(5Z,11Z,14Z)-eicosatrienoyl-CoA + AMP + diphosphate. The catalysed reaction is hexadecanoate + ATP + CoA = hexadecanoyl-CoA + AMP + diphosphate. It carries out the reaction (E)-hexadec-2-enoate + ATP + CoA = (2E)-hexadecenoyl-CoA + AMP + diphosphate. Both triacsin C and rosiglitazone inhibit arachidonoyl-CoA ligase activity. In terms of biological role, catalyzes the conversion of long-chain fatty acids to their active form acyl-CoA for both synthesis of cellular lipids, and degradation via beta-oxidation. Preferentially activates arachidonate and eicosapentaenoate as substrates. Preferentially activates 8,9-EET &gt; 14,15-EET &gt; 5,6-EET &gt; 11,12-EET. Modulates glucose-stimulated insulin secretion by regulating the levels of unesterified EETs. Modulates prostaglandin E2 secretion. This chain is Long-chain-fatty-acid--CoA ligase 4 (Acsl4), found in Rattus norvegicus (Rat).